An 858-amino-acid chain; its full sequence is Ubiquitin carboxyl-terminal hydrolase 5 (858 aa).

Alanine 2 bears the N-acetylalanine mark. Positions 74 to 96 (RRTRRPKEEDPATGTGDPPRKKP) are disordered. Lysine 113 participates in a covalent cross-link: Glycyl lysine isopeptide (Lys-Gly) (interchain with G-Cter in SUMO). Phosphoserine occurs at positions 149 and 156. The UBP-type; degenerate zinc-finger motif lies at 175-283 (QVSKHAFSLK…EHLSHFGIDM (109 aa)). Cysteines 195 and 816 form a disulfide. Zn(2+) contacts are provided by cysteine 199 and cysteine 202. Tryptophan 209 contacts substrate. Zn(2+) is bound at residue cysteine 219. 221–224 (RRYF) contributes to the substrate binding site. A Zn(2+)-binding site is contributed by histidine 232. Residues tyrosine 259, tyrosine 261, and aspartate 264 each contribute to the substrate site. Threonine 292 bears the Phosphothreonine mark. In terms of domain architecture, USP spans 326-856 (TGIRNLGNSC…LGYIYFYQRV (531 aa)). Catalysis depends on cysteine 335, which acts as the Nucleophile. Residue threonine 623 is modified to Phosphothreonine. UBA domains follow at residues 654-695 (MLDE…VMSH) and 722-762 (PPPE…IFSH). Serine 779, serine 783, and serine 785 each carry phosphoserine. Catalysis depends on histidine 818, which acts as the Proton acceptor.

It belongs to the peptidase C19 family. In terms of assembly, homodimer. Interacts with TRIML1. In terms of processing, ubiquitinated by SMURF1; leading to proteasomal degradation. SUMOylated at Lys-113; SUMOylation affects the interaction with Cav3.2 channels.

The protein resides in the cytoplasm. It localises to the stress granule. The protein localises to the nucleus. The catalysed reaction is Thiol-dependent hydrolysis of ester, thioester, amide, peptide and isopeptide bonds formed by the C-terminal Gly of ubiquitin (a 76-residue protein attached to proteins as an intracellular targeting signal).. Its function is as follows. Deubiquitinating enzyme that participates in a wide range of cellular processes by specifically cleaving isopeptide bonds between ubiquitin and substrate proteins or ubiquitin itself. Affects thereby important cellular signaling pathways such as NF-kappa-B, Wnt/beta-catenin, and cytokine production by regulating ubiquitin-dependent protein degradation. Participates in the activation of the Wnt signaling pathway by promoting FOXM1 deubiquitination and stabilization that induces the recruitment of beta-catenin to Wnt target gene promoter. Regulates the assembly and disassembly of heat-induced stress granules by mediating the hydrolysis of unanchored ubiquitin chains. Promotes lipopolysaccharide-induced apoptosis and inflammatory response by stabilizing the TXNIP protein. Affects T-cell biology by stabilizing the inhibitory receptor on T-cells PDC1. Acts as a negative regulator of autophagy by regulating ULK1 at both protein and mRNA levels. Acts also as a negative regulator of type I interferon production by simultaneously removing both 'Lys-48'-linked unanchored and 'Lys-63'-linked anchored polyubiquitin chains on the transcription factor IRF3. Modulates the stability of DNA mismatch repair protein MLH1 and counteracts the effect of the ubiquitin ligase UBR4. Upon activation by insulin, it gets phosphorylated through mTORC1-mediated phosphorylation to enhance YTHDF1 stability by removing 'Lys-11'-linked polyubiquitination. May also deubiquitinate other substrates such as the calcium channel CACNA1H. The chain is Ubiquitin carboxyl-terminal hydrolase 5 (USP5) from Homo sapiens (Human).